Here is a 472-residue protein sequence, read N- to C-terminus: Carboxypeptidase Q (472 aa).

Positions 1 to 20 (MKFLIFAFFGGVHLLSLCSG) are cleaved as a signal peptide. The propeptide occupies 21-44 (KAICKNGISKRTFEEIKEEIASCG). N-linked (GlcNAc...) asparagine glycans are attached at residues Asn61 and Asn179. His290 and Asp302 together coordinate Zn(2+). The Nucleophile role is filled by Glu336. Glu337 contributes to the Zn(2+) binding site. Residues Asn353 and Asn356 are each glycosylated (N-linked (GlcNAc...) asparagine). A Zn(2+)-binding site is contributed by Asp364. Asn396 carries N-linked (GlcNAc...) asparagine glycosylation. His434 is a Zn(2+) binding site.

It belongs to the peptidase M28 family. In terms of assembly, homodimer. The monomeric form is inactive while the homodimer is active. N-glycosylated. The secreted form is modified by hybrid or complex type oligosaccharide chains. As to expression, mainly detected in blood plasma. Abundant in placenta and kidney. Present at low level in muscles, liver and skin fibroblasts. Not detected in brain or white blood cells (at protein level).

Its subcellular location is the endoplasmic reticulum. It localises to the golgi apparatus. The protein resides in the lysosome. It is found in the secreted. Its function is as follows. Carboxypeptidase that may play an important role in the hydrolysis of circulating peptides. Catalyzes the hydrolysis of dipeptides with unsubstituted terminals into amino acids. May play a role in the liberation of thyroxine hormone from its thyroglobulin (Tg) precursor. This Homo sapiens (Human) protein is Carboxypeptidase Q (CPQ).